A 339-amino-acid polypeptide reads, in one-letter code: Ketol-acid reductoisomerase (NADP(+)) (339 aa).

In terms of domain architecture, KARI N-terminal Rossmann spans 1–182 (MRVYYDRDAD…GGGRSGVIET (182 aa)). Residues 24–27 (YGSQ), arginine 48, serine 51, threonine 53, and 83–86 (DELQ) each bind NADP(+). The active site involves histidine 108. Glycine 134 provides a ligand contact to NADP(+). The KARI C-terminal knotted domain maps to 183 to 328 (NFREECETDL…GRLRAMMPWI (146 aa)). Mg(2+) is bound by residues aspartate 191, glutamate 195, glutamate 227, and glutamate 231. Serine 252 is a binding site for substrate.

Belongs to the ketol-acid reductoisomerase family. Mg(2+) is required as a cofactor.

The enzyme catalyses (2R)-2,3-dihydroxy-3-methylbutanoate + NADP(+) = (2S)-2-acetolactate + NADPH + H(+). It catalyses the reaction (2R,3R)-2,3-dihydroxy-3-methylpentanoate + NADP(+) = (S)-2-ethyl-2-hydroxy-3-oxobutanoate + NADPH + H(+). It functions in the pathway amino-acid biosynthesis; L-isoleucine biosynthesis; L-isoleucine from 2-oxobutanoate: step 2/4. Its pathway is amino-acid biosynthesis; L-valine biosynthesis; L-valine from pyruvate: step 2/4. Its function is as follows. Involved in the biosynthesis of branched-chain amino acids (BCAA). Catalyzes an alkyl-migration followed by a ketol-acid reduction of (S)-2-acetolactate (S2AL) to yield (R)-2,3-dihydroxy-isovalerate. In the isomerase reaction, S2AL is rearranged via a Mg-dependent methyl migration to produce 3-hydroxy-3-methyl-2-ketobutyrate (HMKB). In the reductase reaction, this 2-ketoacid undergoes a metal-dependent reduction by NADPH to yield (R)-2,3-dihydroxy-isovalerate. The chain is Ketol-acid reductoisomerase (NADP(+)) from Phenylobacterium zucineum (strain HLK1).